A 422-amino-acid polypeptide reads, in one-letter code: Probable protein phosphatase 2C 43 (422 aa).

The PPM-type phosphatase domain maps to 117 to 393 (SSGSYADKGD…DNVTVVVICF (277 aa)). The Mn(2+) site is built by D163, G164, D341, and D384.

The protein belongs to the PP2C family. The cofactor is Mg(2+). Mn(2+) is required as a cofactor.

It catalyses the reaction O-phospho-L-seryl-[protein] + H2O = L-seryl-[protein] + phosphate. The catalysed reaction is O-phospho-L-threonyl-[protein] + H2O = L-threonyl-[protein] + phosphate. This is Probable protein phosphatase 2C 43 from Arabidopsis thaliana (Mouse-ear cress).